A 1121-amino-acid chain; its full sequence is Piwi-like protein ergo-1 (1121 aa).

Residues 1-14 (MSYNNGGGGGGGGY) are compositionally biased toward gly residues. The tract at residues 1-134 (MSYNNGGGGG…GNRGGGGGRV (134 aa)) is disordered. Basic and acidic residues-rich tracts occupy residues 15–29 (RNDR…DRQN) and 40–77 (YNDD…DRRG). Residues 99 to 112 (GSNQRNDNYGNNRG) are compositionally biased toward polar residues. The span at 125–134 (GNRGGGGGRV) shows a compositional bias: gly residues. The PAZ domain maps to 426-534 (VMTQILTKMT…MPLELVSYIV (109 aa)). Residues 774-1081 (NVLKYLADNK…AAKRAKETLD (308 aa)) form the Piwi domain.

The protein belongs to the argonaute family. Piwi subfamily. In terms of assembly, interacts with rde-12. Interacts with rde-10. As to expression, highly expressed in the germline in hermaphrodites.

The protein localises to the cytoplasm. In terms of biological role, argonaute protein required for gene silencing in the endogenous RNA interference (RNAi) pathway. Involved in the 26G RNAi pathway and associates with both unmethylated and methylated 26G small interfering RNAs (26G-siRNAs), which are a class of 26 nucleotide siRNAs that possess a guanine residue at the 5'-end. Associated 26G-siRNAs are methylated by the methyltransferase henn-1, which stabilizes the siRNAs. Association with 26G-siRNAs is required for the biogenesis of secondary 22G-siRNAs (a class of 22 nucleotide siRNAs that possess a triphosphorylated guanine residue at the 5'-end). May be involved in passenger strand cleavage of target 26G-siRNAs. This Caenorhabditis elegans protein is Piwi-like protein ergo-1.